Consider the following 429-residue polypeptide: Gamma-glutamyl phosphate reductase (429 aa).

This sequence belongs to the gamma-glutamyl phosphate reductase family.

Its subcellular location is the cytoplasm. It catalyses the reaction L-glutamate 5-semialdehyde + phosphate + NADP(+) = L-glutamyl 5-phosphate + NADPH + H(+). It functions in the pathway amino-acid biosynthesis; L-proline biosynthesis; L-glutamate 5-semialdehyde from L-glutamate: step 2/2. In terms of biological role, catalyzes the NADPH-dependent reduction of L-glutamate 5-phosphate into L-glutamate 5-semialdehyde and phosphate. The product spontaneously undergoes cyclization to form 1-pyrroline-5-carboxylate. The sequence is that of Gamma-glutamyl phosphate reductase from Methylibium petroleiphilum (strain ATCC BAA-1232 / LMG 22953 / PM1).